We begin with the raw amino-acid sequence, 923 residues long: MDYKSTLNLPVTDFPMKANLPQREPEILAAWQQGDLYGTIAKAGKGKPRYVLHDGPPYANGHIHIGHALNKILKDIILKSKRMQGFDAPYVPGWDCHGLPIELQVEKNLGSKKHETTKLQMRKQCREYAEKFVHVQRAEFERLGVLGDWDRPYLTMSYDYEGITARELARFAENGGLYKGKKPVHWCSSCVTALAEAEVEYADKTSPSIYVKFLLQDDIGGAVPALAGKRVSLVIWTTTPWTIPANLAVALHPELDYVALETGGEVLVVAEGLKDAFMAATGVQGDVIATFRADILYRKRCKHPFYDRDSIVLLGEHVTLDAGTGCVHTAPGHGQEDYELALVEGLDIYNPVDNRGRYIQSLEFFGGMFVFDANAAVMEKLREVGALVGQGSVEHSYPHCWRCKKPIIFRATEQWFISMEKNDLRQKALTEIDRVSWVPKWGRERIHGMIENRPDWCISRQRSWGVPITAFYCTECGEILADGKTMHHVADLFMAGGADLWYEKEAAELLPPGTVCPQCGKSAFEKEMDILDVWFDSGVSHAAVLENRPELGSPANMYLEGSDQHRGWFHSSLLASVGTRGVAPYREVLTHGFVVDGSGRKMSKSVGNVVAPEEVIKKYGAEILRLWVAAQDYRDDVRISQEILTRLAEAYRRIRNTCRYLLGNLNDFDPDVDMVPYDRMTELDRWALHQLEVLKEKVAAAYNEYEFHILYHAVNGFCTVEMSAFYLDIIKERYTSRKDAPERRSAQSVMYLVLESLVTLMAPVLSFTADEVWGYMPKRSESSVHLATFPEFRPEWKDESLVERWARIMAVRGDVSKALEQARVQKTIGHSLDAAVTLAAEPGLLSFLQEYAGELSTIFIVSRVDLVEEGAGDYPAAEGVSGLRIGVSAAPGEKCERCWHYDEEIGGDSEHPTLCPKCAAAVK.

Positions P57–H67 match the 'HIGH' region motif. An L-isoleucyl-5'-AMP-binding site is contributed by E560. The 'KMSKS' region signature appears at K601–S605. K604 lines the ATP pocket. Zn(2+)-binding residues include C895, C898, C915, and C918.

This sequence belongs to the class-I aminoacyl-tRNA synthetase family. IleS type 1 subfamily. Monomer. Requires Zn(2+) as cofactor.

It localises to the cytoplasm. It catalyses the reaction tRNA(Ile) + L-isoleucine + ATP = L-isoleucyl-tRNA(Ile) + AMP + diphosphate. In terms of biological role, catalyzes the attachment of isoleucine to tRNA(Ile). As IleRS can inadvertently accommodate and process structurally similar amino acids such as valine, to avoid such errors it has two additional distinct tRNA(Ile)-dependent editing activities. One activity is designated as 'pretransfer' editing and involves the hydrolysis of activated Val-AMP. The other activity is designated 'posttransfer' editing and involves deacylation of mischarged Val-tRNA(Ile). In Geobacter sulfurreducens (strain ATCC 51573 / DSM 12127 / PCA), this protein is Isoleucine--tRNA ligase.